The sequence spans 336 residues: Transmembrane protein 120A (336 aa).

Over 1–131 (MNSPALQDCV…KQSKFAYKDE (131 aa)) the chain is Cytoplasmic. Lysine 129 is a CoA binding site. Residues 132 to 151 (YEKFKLYLTMILMVLSFICR) traverse the membrane as a helical segment. Residues 152 to 157 (FVLNSR) lie on the Extracellular side of the membrane. The helical transmembrane segment at 158 to 176 (VTDAVFNFLLVWYYCTLTI) threads the bilayer. Residues 177–189 (RESILINNGSRIK) are Cytoplasmic-facing. CoA-binding residues include serine 186 and arginine 187. The helical transmembrane segment at 190-208 (GWWVLNHYISTFLSGVMLT) threads the bilayer. Residues 209 to 217 (WPDGLMYQM) are Extracellular-facing. A helical transmembrane segment spans residues 218-239 (FRNQFLSFSMYQSFVQFLQYYY). CoA-binding residues include glutamine 236, tyrosine 239, and glutamine 240. The Cytoplasmic portion of the chain corresponds to 240–269 (QSGCLYRLRALGERHNMDLTVEGFQSWMWR). Residues 270 to 293 (GLTFLLPFLFFGQFWQLYNAITLF) traverse the membrane as a helical segment. Over 294-303 (KLARHPECKE) the chain is Extracellular. A helical transmembrane segment spans residues 304-329 (WQVIMCGLPFLVHFLGNFFTTLRVVH). Residues 330 to 336 (QKFQKQN) are Cytoplasmic-facing. Lysine 331 provides a ligand contact to CoA.

The protein belongs to the TMEM120 family. Homodimer.

It localises to the cell membrane. The protein localises to the nucleus inner membrane. It is found in the endoplasmic reticulum. Its function is as follows. Multifunctional protein involved in mechanosensation, and plays an essential role in lipid metabolism. May function as a potential ion channel involved in sensing mechanical stimuli. TMEM120A is structurally similar to a lipid-modifying enzyme, ELOVL7, and contains a bound coenzyme A molecule, which suggests it might function as an enzyme in lipid metabolism. In Xenopus tropicalis (Western clawed frog), this protein is Transmembrane protein 120A.